The sequence spans 166 residues: Putative peroxiredoxin (166 aa).

The Thioredoxin domain maps to 1–166 (EIGSTIPNAT…SSAATVLSKL (166 aa)). The active-site Cysteine sulfenic acid (-SOH) intermediate is cysteine 56. Positions 164–166 (SKL) match the Microbody targeting signal motif.

The protein belongs to the peroxiredoxin family. Prx5 subfamily. In terms of assembly, homodimer; disulfide-linked, upon oxidation.

The catalysed reaction is a hydroperoxide + [thioredoxin]-dithiol = an alcohol + [thioredoxin]-disulfide + H2O. Thiol-specific peroxidase that catalyzes the reduction of hydrogen peroxide and organic hydroperoxides to water and alcohols, respectively. Plays a role in cell protection against oxidative stress by detoxifying peroxides and as sensor of hydrogen peroxide-mediated signaling events. This is Putative peroxiredoxin from Malassezia furfur (Pityriasis versicolor infection agent).